The chain runs to 185 residues: MEKHLVMYLTRKSIMLLRKYLLVTEFQVSKCGSHIVKIRRDVLYPKRTKYSKYSKCRCSRGREPDGTQLGFGRYGTKSSRAGRLSYRAIEAARRATIGQFRRAMSGQFRRNCKIWVRVLADLPITGKPAEVRMGRGKGNPTGWIARVSTGQIPFEMDGVSLSNARQAARLAAHKPCSSTKFVQWS.

This sequence belongs to the universal ribosomal protein uL16 family.

It localises to the mitochondrion. The sequence is that of Large ribosomal subunit protein uL16m (RPL16) from Zea mays (Maize).